Consider the following 495-residue polypeptide: MQKRRIITVNPSASIEMSQYENNEVPYSSVGADEVPSSPPKATDKIRKVSMLPLVFLIFYEVSGGPFGVEDSVNAAGPLLALLGFVIFPFIWSIPEALITAEMGTMYPENGGYVVWVSSALGPFWGFQQGWMKWLSGVIDNALYPVLFLDYLKSGVPALGSGLPRVASILVLTILLTYLNYRGLTIVGWVAVLMGVFSILPFAVMGLISIPQLEPSRWLVMDLGNVNWNLYLNTLFWNLNYWDSISTLAGEVENPNHTLPKALFYGVILVACSYIFPLLAGIGAIPLEREKWTDGYFSDVAKALGGAWLRWWVQAAAATSNMGMFIAEMSSDSFQLLGMAERGMLPEFFAKRSRYGTPLLGILFSASGVVLLSWLSFQEIVAAENLLYCVGMILEFIAFVRMRMKHPAASRPYKIPIGTTGSILMCIPPTILICAVVALSSLKVAAVSIVMMIIGFLIHPLLNHMDRKRWVKFSISSDLPDLQQQTREYEETLIR.

The next 11 membrane-spanning stretches (helical) occupy residues 49–69 (VSML…PFGV), 79–99 (LLAL…EALI), 112–132 (GYVV…QGWM), 156–176 (VPAL…TILL), 186–206 (IVGW…AVMG), 230–250 (LYLN…TLAG), 267–287 (VILV…AIPL), 357–377 (TPLL…WLSF), 380–400 (IVAA…IAFV), 417–437 (IGTT…CAVV), and 442–462 (LKVA…HPLL).

It belongs to the amino acid-polyamine-organocation (APC) superfamily. Polyamine:cation symporter (PHS) (TC 2.A.3.12) family.

It localises to the cell membrane. In terms of biological role, probable cell membrane polyamine/proton symporter involved in the polyamine uptake in cells. This is Probable polyamine transporter At1g31830 from Arabidopsis thaliana (Mouse-ear cress).